The primary structure comprises 439 residues: Xaa-Pro dipeptidase (439 aa).

D244, D255, H335, E380, and E419 together coordinate Mn(2+).

It belongs to the peptidase M24B family. Bacterial-type prolidase subfamily. Requires Mn(2+) as cofactor.

It carries out the reaction Xaa-L-Pro dipeptide + H2O = an L-alpha-amino acid + L-proline. Splits dipeptides with a prolyl residue in the C-terminal position. The sequence is that of Xaa-Pro dipeptidase from Shewanella sp. (strain ANA-3).